We begin with the raw amino-acid sequence, 588 residues long: Probable cytochrome c oxidase subunit 1-beta (588 aa).

The interval 1–26 is disordered; the sequence is MTATPAQRRPALPATRPYPARHGPKG. Residues 43–63 traverse the membrane as a helical segment; the sequence is VLYLVSATGFFLIGGLLALLM. H87 provides a ligand contact to Fe(II)-heme a. Helical transmembrane passes span 90–110, 128–148, 171–191, 214–234, 259–279, and 291–311; these read IMLL…VLPL, WLYL…GGAA, LWIL…VNMI, ILIT…ALMA, LFWF…FGII, and IFGY…SMAV. Residues H265 and Y269 each coordinate Cu cation. Residues 265–269 constitute a cross-link (1'-histidyl-3'-tyrosine (His-Tyr)); it reads HPEVY. Positions 314 and 315 each coordinate Cu cation. The next 2 helical transmembrane spans lie at 320–340 and 360–380; these read GAVL…PTGV and MLFA…GVIL. Residue H398 coordinates heme a3. The next 3 membrane-spanning stretches (helical) occupy residues 399–419, 434–454, and 477–497; these read FHYV…YFWF, LHFW…HWLG, and VSTI…WNGF. H400 contributes to the Fe(II)-heme a binding site. Residues 557 to 588 form a disordered region; that stretch reads AEAHAGRRAGHGAGAELSVPSTVATKDDDHTS.

The protein belongs to the heme-copper respiratory oxidase family. Associates with subunits II, III and IV to form cytochrome c oxidase. Cu(2+) serves as cofactor. Requires heme as cofactor.

It localises to the cell membrane. It catalyses the reaction 4 Fe(II)-[cytochrome c] + O2 + 8 H(+)(in) = 4 Fe(III)-[cytochrome c] + 2 H2O + 4 H(+)(out). The protein operates within energy metabolism; oxidative phosphorylation. In terms of biological role, cytochrome c oxidase is the component of the respiratory chain that catalyzes the reduction of oxygen to water. Subunits 1-3 form the functional core of the enzyme complex. CO I is the catalytic subunit of the enzyme. Electrons originating in cytochrome c are transferred via the copper A center of subunit 2 and heme A of subunit 1 to the bimetallic center formed by heme A3 and copper B. The sequence is that of Probable cytochrome c oxidase subunit 1-beta (ctaD2) from Nocardia farcinica (strain IFM 10152).